A 201-amino-acid chain; its full sequence is Recombination protein RecR (201 aa).

The segment at 60–75 (CSCCGNVDTIDPCTVC) adopts a C4-type zinc-finger fold. The Toprim domain maps to 83–178 (SMIIVVEDVS…KTTRLAHGVP (96 aa)).

This sequence belongs to the RecR family.

May play a role in DNA repair. It seems to be involved in an RecBC-independent recombinational process of DNA repair. It may act with RecF and RecO. This chain is Recombination protein RecR, found in Allorhizobium ampelinum (strain ATCC BAA-846 / DSM 112012 / S4) (Agrobacterium vitis (strain S4)).